The chain runs to 378 residues: Anhydro-N-acetylmuramic acid kinase (378 aa).

Gly-9–Asp-16 contributes to the ATP binding site.

This sequence belongs to the anhydro-N-acetylmuramic acid kinase family.

It catalyses the reaction 1,6-anhydro-N-acetyl-beta-muramate + ATP + H2O = N-acetyl-D-muramate 6-phosphate + ADP + H(+). Its pathway is amino-sugar metabolism; 1,6-anhydro-N-acetylmuramate degradation. It participates in cell wall biogenesis; peptidoglycan recycling. In terms of biological role, catalyzes the specific phosphorylation of 1,6-anhydro-N-acetylmuramic acid (anhMurNAc) with the simultaneous cleavage of the 1,6-anhydro ring, generating MurNAc-6-P. Is required for the utilization of anhMurNAc either imported from the medium or derived from its own cell wall murein, and thus plays a role in cell wall recycling. The sequence is that of Anhydro-N-acetylmuramic acid kinase from Microcystis aeruginosa (strain NIES-843 / IAM M-2473).